Reading from the N-terminus, the 333-residue chain is DNA-directed RNA polymerase subunit alpha (333 aa).

The interval 1-234 is alpha N-terminal domain (alpha-NTD); sequence MQISVNEFLT…QQLAAFVDLK (234 aa). Residues 248–333 are alpha C-terminal domain (alpha-CTD); sequence IDPILLRPVD…SLKKDDKATA (86 aa).

This sequence belongs to the RNA polymerase alpha chain family. In terms of assembly, homodimer. The RNAP catalytic core consists of 2 alpha, 1 beta, 1 beta' and 1 omega subunit. When a sigma factor is associated with the core the holoenzyme is formed, which can initiate transcription.

The catalysed reaction is RNA(n) + a ribonucleoside 5'-triphosphate = RNA(n+1) + diphosphate. DNA-dependent RNA polymerase catalyzes the transcription of DNA into RNA using the four ribonucleoside triphosphates as substrates. In Pseudomonas fluorescens (strain ATCC BAA-477 / NRRL B-23932 / Pf-5), this protein is DNA-directed RNA polymerase subunit alpha.